The sequence spans 361 residues: Outer mitochondrial transmembrane helix translocase (361 aa).

Residues 1 to 15 (MVHAEAFSRPLSRNE) lie on the Mitochondrial intermembrane side of the membrane. Residues 16–32 (VVGLIFRLTIFGAVTYF) traverse the membrane as a helical segment. Topologically, residues 33–361 (TIKWMVDAID…QSVLTHVCLD (329 aa)) are cytoplasmic. Position 133–140 (133–140 (GPPGCGKT)) interacts with ATP. Serine 322 is subject to Phosphoserine.

It belongs to the AAA ATPase family. MSP1 subfamily. As to quaternary structure, interacts with GRIA2 and GRIP1 in an ATP-dependent manner. ATAD1-catalyzed ATP hydrolysis disrupts not only its binding to GRIA2 and GRIP1, but also interaction between GRIP1 and GRIA2, leading to AMPAR complex disassembly.

The protein localises to the mitochondrion outer membrane. It is found in the peroxisome membrane. It localises to the postsynaptic cell membrane. The enzyme catalyses [protein]-with a C-terminal TM segment(out) + ATP + H2O = [protein]-with a C-terminal TM segment(in) + ADP + phosphate + H(+). Outer mitochondrial translocase required to remove mislocalized tail-anchored transmembrane proteins on mitochondria. Specifically recognizes and binds tail-anchored transmembrane proteins: acts as a dislocase that mediates the ATP-dependent extraction of mistargeted tail-anchored transmembrane proteins from the mitochondrion outer membrane. Also plays a critical role in regulating the surface expression of AMPA receptors (AMPAR), thereby regulating synaptic plasticity and learning and memory. Required for NMDA-stimulated AMPAR internalization and inhibition of GRIA1 and GRIA2 recycling back to the plasma membrane; these activities are ATPase-dependent. The chain is Outer mitochondrial transmembrane helix translocase from Rattus norvegicus (Rat).